The sequence spans 61 residues: KEGYLMDHEGCKLSCFIRPAGYCGRECAIKKGSEGYCAWPACYCYKLPNHVKVWEYATNRC.

In terms of domain architecture, LCN-type CS-alpha/beta spans 1–61 (KEGYLMDHEG…KVWEYATNRC (61 aa)). Disulfide bonds link Cys-11/Cys-61, Cys-15/Cys-37, Cys-23/Cys-42, and Cys-27/Cys-44. The residue at position 61 (Cys-61) is a Cysteine amide.

Belongs to the long (4 C-C) scorpion toxin superfamily. Sodium channel inhibitor family. Beta subfamily. In terms of tissue distribution, expressed by the venom gland.

It localises to the secreted. Its function is as follows. Beta toxins bind voltage-independently at site-4 of sodium channels (Nav) and shift the voltage of activation toward more negative potentials thereby affecting sodium channel activation and promoting spontaneous and repetitive firing. In Tityus cerroazul (Scorpion), this protein is Beta-toxin Tce4.